A 309-amino-acid chain; its full sequence is tRNA dimethylallyltransferase (309 aa).

An ATP-binding site is contributed by 11-18 (GPTATGKS). 13-18 (TATGKS) is a substrate binding site.

The protein belongs to the IPP transferase family. As to quaternary structure, monomer. Requires Mg(2+) as cofactor.

It carries out the reaction adenosine(37) in tRNA + dimethylallyl diphosphate = N(6)-dimethylallyladenosine(37) in tRNA + diphosphate. In terms of biological role, catalyzes the transfer of a dimethylallyl group onto the adenine at position 37 in tRNAs that read codons beginning with uridine, leading to the formation of N6-(dimethylallyl)adenosine (i(6)A). This chain is tRNA dimethylallyltransferase, found in Rhodococcus jostii (strain RHA1).